Consider the following 332-residue polypeptide: 5-dehydro-2-deoxygluconokinase (332 aa).

It belongs to the carbohydrate kinase PfkB family.

It carries out the reaction 5-dehydro-2-deoxy-D-gluconate + ATP = 6-phospho-5-dehydro-2-deoxy-D-gluconate + ADP + H(+). Its pathway is polyol metabolism; myo-inositol degradation into acetyl-CoA; acetyl-CoA from myo-inositol: step 5/7. In terms of biological role, catalyzes the phosphorylation of 5-dehydro-2-deoxy-D-gluconate (2-deoxy-5-keto-D-gluconate or DKG) to 6-phospho-5-dehydro-2-deoxy-D-gluconate (DKGP). This chain is 5-dehydro-2-deoxygluconokinase, found in Bacillus anthracis (strain A0248).